The following is a 283-amino-acid chain: Methylamine utilization protein MauF (283 aa).

A run of 7 helical transmembrane segments spans residues Phe-37–Ala-57, Met-58–Leu-78, Gly-116–Phe-136, Tyr-143–Met-163, Ile-187–Ile-207, Ile-210–Ile-230, and Val-263–Leu-283.

Its subcellular location is the cell membrane. The protein operates within one-carbon metabolism; methylamine degradation. This Methylobacillus flagellatus (strain ATCC 51484 / DSM 6875 / VKM B-1610 / KT) protein is Methylamine utilization protein MauF (mauF).